The following is a 360-amino-acid chain: Phospho-N-acetylmuramoyl-pentapeptide-transferase (360 aa).

A run of 10 helical transmembrane segments spans residues 26 to 46 (SIMA…KVIN), 73 to 93 (TMGG…WADL), 98 to 118 (VWFT…DDYW), 132 to 152 (WKYF…YAMG), 168 to 188 (VMPQ…VGTS), 199 to 219 (GLAI…AWAT), 236 to 256 (SGEL…FLWY), 263 to 283 (VFMG…IAVL), 288 to 308 (LLLL…ILQV), and 338 to 358 (VIVR…VTLK).

This sequence belongs to the glycosyltransferase 4 family. MraY subfamily. Mg(2+) serves as cofactor.

The protein resides in the cell inner membrane. The enzyme catalyses UDP-N-acetyl-alpha-D-muramoyl-L-alanyl-gamma-D-glutamyl-meso-2,6-diaminopimeloyl-D-alanyl-D-alanine + di-trans,octa-cis-undecaprenyl phosphate = di-trans,octa-cis-undecaprenyl diphospho-N-acetyl-alpha-D-muramoyl-L-alanyl-D-glutamyl-meso-2,6-diaminopimeloyl-D-alanyl-D-alanine + UMP. Its pathway is cell wall biogenesis; peptidoglycan biosynthesis. Catalyzes the initial step of the lipid cycle reactions in the biosynthesis of the cell wall peptidoglycan: transfers peptidoglycan precursor phospho-MurNAc-pentapeptide from UDP-MurNAc-pentapeptide onto the lipid carrier undecaprenyl phosphate, yielding undecaprenyl-pyrophosphoryl-MurNAc-pentapeptide, known as lipid I. This is Phospho-N-acetylmuramoyl-pentapeptide-transferase from Haemophilus ducreyi (strain 35000HP / ATCC 700724).